The chain runs to 327 residues: Phenylalanine--tRNA ligase alpha subunit (327 aa).

Glu252 is a binding site for Mg(2+).

Belongs to the class-II aminoacyl-tRNA synthetase family. Phe-tRNA synthetase alpha subunit type 1 subfamily. Tetramer of two alpha and two beta subunits. Requires Mg(2+) as cofactor.

It is found in the cytoplasm. It carries out the reaction tRNA(Phe) + L-phenylalanine + ATP = L-phenylalanyl-tRNA(Phe) + AMP + diphosphate + H(+). The protein is Phenylalanine--tRNA ligase alpha subunit of Photorhabdus laumondii subsp. laumondii (strain DSM 15139 / CIP 105565 / TT01) (Photorhabdus luminescens subsp. laumondii).